The primary structure comprises 404 residues: MTKEKIVLAYSGGLDTSVAIQWLVESGYEVIACCLDVGEGKNLDFIKEKAITVGASASYTIDAKEEFAENFALIALQAHAYYEGKYPLISALSRPLIAKKLVEVARQEGASAIAHGCTGKGNDQVRFEVAIHALAPDLKVVSPVRDWKWSREEEINYAKEHNIPVPIDLDNPFSIDQNLWGRSNECGVLENPWTTPPEAAYDLTVSLEDAPDTADIVEITFDAGIPISLNGENMSLANLILTLNEIAGKHGVGRIDHIENRLVGIKSREVYECPAAVTLITAHKELEDLTFVREVAHFKPIIEQKISETIYNGLWFSPLTEALIAFLKSTQKFVNGTIRVKLFKGHAIVEGRKSPNSLYDENLATYTSSDTFDQDAAVGFIKLFGLPTKVSAEVNSKVTITTEV.

9–17 (AYSGGLDTS) provides a ligand contact to ATP. Position 86 (Tyr86) interacts with L-citrulline. Gly116 is an ATP binding site. L-aspartate-binding residues include Thr118, Asn122, and Asp123. Residue Asn122 coordinates L-citrulline. L-citrulline-binding residues include Arg126, Ser174, Ser183, Glu259, and Tyr271.

Belongs to the argininosuccinate synthase family. Type 1 subfamily. In terms of assembly, homotetramer.

Its subcellular location is the cytoplasm. The enzyme catalyses L-citrulline + L-aspartate + ATP = 2-(N(omega)-L-arginino)succinate + AMP + diphosphate + H(+). Its pathway is amino-acid biosynthesis; L-arginine biosynthesis; L-arginine from L-ornithine and carbamoyl phosphate: step 2/3. The protein is Argininosuccinate synthase of Listeria innocua serovar 6a (strain ATCC BAA-680 / CLIP 11262).